The following is a 255-amino-acid chain: Complement C1q-like protein 3 (255 aa).

An N-terminal signal peptide occupies residues 1–20 (MVLLLVILIPVLVSSAGTSA). Residues 39 to 109 (KAPSTAATPD…GLPGPPGAPG (71 aa)) form a disordered region. The region spanning 61 to 111 (GPKGEAGRPGKAGPRGPPGEPGPPGPMGPPGEKGEPGRQGLPGPPGAPGLN) is the Collagen-like domain. The segment covering 75–89 (RGPPGEPGPPGPMGP) has biased composition (pro residues). In terms of domain architecture, C1q spans 122–255 (STVPKIAFYA…TFSGFIIYAD (134 aa)).

As to quaternary structure, forms homooligomers. Interacts with ADGRB3. Interacts with C1QL2 and C1QL4, when proteins are coexpressed; this interaction does not occur after secretion. As to expression, highly expressed in adipose tissue, with expression levels at least 2 orders of magnitude higher than in other tissues, including brain and kidney.

The protein resides in the secreted. May regulate the number of excitatory synapses that are formed on hippocampus neurons. Has no effect on inhibitory synapses. Plays a role in glucose homeostasis. Via AMPK signaling pathway, stimulates glucose uptake in adipocytes, myotubes and hepatocytes and enhances insulin-stimulated glucose uptake. In a hepatoma cell line, reduces the expression of gluconeogenic enzymes G6PC1 and PCK1 and hence decreases de novo glucose production. This Homo sapiens (Human) protein is Complement C1q-like protein 3 (C1QL3).